We begin with the raw amino-acid sequence, 219 residues long: Envelope protein UL45 homolog (219 aa).

The Intravirion segment spans residues 1–57; that stretch reads MEDYKLLQLETATVDAQAPPLPTKTVPVFAPPLSTPPQPNELVYTKRRRTKRKAKCR. A helical; Signal-anchor for type II membrane protein membrane pass occupies residues 58–78; it reads CLFFTMGMFALGVLMTTAILV. Residues 79 to 219 lie on the Virion surface side of the membrane; it reads STFILTVPIG…RLDHIIPFPR (141 aa). N-linked (GlcNAc...) asparagine; by host glycans are attached at residues Asn113, Asn120, and Asn138.

Belongs to the herpesviridae HHV-1 UL45 family. Post-translationally, N-glycosylated.

Its subcellular location is the virion membrane. The protein is Envelope protein UL45 homolog of Equine herpesvirus 1 (strain Ab4p) (EHV-1).